The following is a 131-amino-acid chain: Large ribosomal subunit protein bL17 (131 aa).

This sequence belongs to the bacterial ribosomal protein bL17 family. In terms of assembly, part of the 50S ribosomal subunit. Contacts protein L32.

The chain is Large ribosomal subunit protein bL17 from Nitrosospira multiformis (strain ATCC 25196 / NCIMB 11849 / C 71).